Consider the following 657-residue polypeptide: Tyrosine-protein phosphatase vhp-1 (657 aa).

The 131-residue stretch at 21-151 (APDTTLVVDC…FAQQYPQLCE (131 aa)) folds into the Rhodanese domain. The Tyrosine-protein phosphatase domain maps to 175 to 318 (GITLITPNIY…LLEYENVLIK (144 aa)). Cysteine 262 (phosphocysteine intermediate) is an active-site residue. Disordered stretches follow at residues 353 to 426 (SNCV…MDLG), 539 to 563 (VPAG…SSSA), and 581 to 657 (PAST…PCHQ). Residues 366–405 (SPSSPSVSEGSAASEPETSSSAASSSSTASAPPSMPSTSE) are compositionally biased toward low complexity. Polar residues predominate over residues 406–419 (QGTSSGTVNVNGKR). Composition is skewed to low complexity over residues 542–563 (GSSS…SSSA) and 581–597 (PAST…TSRA).

The protein belongs to the protein-tyrosine phosphatase family. Non-receptor class dual specificity subfamily. In terms of assembly, may interact with pmk-3. Expressed in the pharynx, intestine, neurons and vulval hypodermal cells.

It carries out the reaction O-phospho-L-tyrosyl-[protein] + H2O = L-tyrosyl-[protein] + phosphate. Acts preferentially on the c-Jun N-terminal kinase (JNK) and p38 MAPKs. Plays an important role in the heavy metal stress response and in axon regeneration by negatively regulating the kgb-1 (JNK-like) and the pmk-1 (p38-type) MAPK signaling pathways. The polypeptide is Tyrosine-protein phosphatase vhp-1 (vhp-1) (Caenorhabditis elegans).